Here is a 254-residue protein sequence, read N- to C-terminus: Glc operon transcriptional activator (254 aa).

The region spanning Arg-6–Leu-74 is the HTH gntR-type domain. Positions Glu-34–Thr-53 form a DNA-binding region, H-T-H motif.

Its function is as follows. Transcriptional activator of the glcDEFGB operon which is associated with glycolate utilization, and encodes malate synthase G and the genes needed for glycolate oxidase activity. Also negatively regulates the transcription of its own gene. Glycolate acts as an effector, but GlcC can also use acetate as an alternative effector. This is Glc operon transcriptional activator (glcC) from Escherichia coli O6:H1 (strain CFT073 / ATCC 700928 / UPEC).